A 440-amino-acid polypeptide reads, in one-letter code: Indoleamine 2,3-dioxygenase qulI (440 aa).

Histidine 347 lines the heme pocket.

It belongs to the indoleamine 2,3-dioxygenase family. As to quaternary structure, monomer. Heme serves as cofactor.

It catalyses the reaction D-tryptophan + O2 = N-formyl-D-kynurenine. It carries out the reaction L-tryptophan + O2 = N-formyl-L-kynurenine. Its pathway is secondary metabolite biosynthesis. Functionally, indoleamine 2,3-dioxygenase; part of the gene cluster that mediates the biosynthesis of quinolactacin A2 (QUL A2), a fungal alkaloid that features a quinolone-gamma-lactam hybrid, which is a potential pharmacophore for the treatment of cancer and Alzheimer's disease. The quinolone-gamma-lactam hybrid scaffold is synthesized from the combination of L-isoleucine (L-Ile) and the nonproteinogenic amino acid L-kynurenine, followed by quinolone cyclization, oxidative decarboxylation, and lactam formation. Additionally, the N-methyl group is derived from methionine, which might be catalyzed by an S-adenosylmethionine (SAM)-dependent methyltransferase. Bioconversion of L-tryptophan to L-kynurenine could be catalyzed by the indoleamine-2,3-dioxygenase (IDO) qulI to produce an unstable product, N-formyl-L-kynurenine, followed by kynurenine formamidase catalyzed hydrolysis. QulM then acts as a methyltransferase that methylates L-kynurenine at the N-4 position. The FMN-dependent alpha-hydroxy acid dehydrogenase qulF than functions as an oxidative decarboxylase which converts N-methylkynurenine into 2-aminobenzoylacetamide via 2 tandem reactions, including dehydrogenation and decarboxylation. An amidase located outside of the qul gene cluster further produces the unstable beta-keto acid precursor N-methyl-2-aminobenzoylacetate, which could be spontaneously dehydrated to form N-methyl-4-hydroxy-2-quinolone. The NRPS qulB is able to incorporate N-methyl-2-aminobenzoylacetate and efficiently compete with the spontaneous reaction. By further extending the beta-keto acid with L-Ile, qulA performs a Dieckmann condensation to form the gamma-lactam ring and release a 4-ketopyrrolidinone intermediate from the assembly line. This intermediate could plausibly further undergo a spontaneous cyclization to yield the final quinolone-gamma-lactam hybrid structure. This chain is Indoleamine 2,3-dioxygenase qulI, found in Penicillium citrinum.